The chain runs to 238 residues: Uroporphyrinogen-III C-methyltransferase (238 aa).

S-adenosyl-L-homocysteine-binding positions include P11, 87 to 89 (GGD), 117 to 118 (TS), and M170.

The protein belongs to the precorrin methyltransferase family. Monomer.

It catalyses the reaction uroporphyrinogen III + 2 S-adenosyl-L-methionine = precorrin-2 + 2 S-adenosyl-L-homocysteine + H(+). It participates in cofactor biosynthesis; adenosylcobalamin biosynthesis; precorrin-2 from uroporphyrinogen III: step 1/1. Its pathway is porphyrin-containing compound metabolism; siroheme biosynthesis; precorrin-2 from uroporphyrinogen III: step 1/1. With respect to regulation, SUMT exhibits a substrate inhibition phenomenon at uroporphyrinogen III concentrations above 0.5 uM; this property might play a regulatory role in cobalamin biosynthesis. Functionally, catalyzes the two successive C-2 and C-7 methylation reactions involved in the conversion of uroporphyrinogen III to precorrin-2 via the intermediate formation of precorrin-1. It is a step in the biosynthesis of both cobalamin (vitamin B12) and siroheme. The chain is Uroporphyrinogen-III C-methyltransferase from Priestia megaterium (Bacillus megaterium).